Here is a 1060-residue protein sequence, read N- to C-terminus: Carbamoyl phosphate synthase large chain (1060 aa).

The segment at 1–401 (MPKRTDIRKI…SLLKACRSLE (401 aa)) is carboxyphosphate synthetic domain. Arg-129, Arg-169, Gly-175, Gly-176, Arg-208, Ile-210, Glu-215, Gly-241, Ile-242, His-243, Gln-284, and Glu-298 together coordinate ATP. One can recognise an ATP-grasp 1 domain in the interval 133 to 327 (KQLMEELNQP…IAKLAAKIAV (195 aa)). Mg(2+)-binding residues include Gln-284, Glu-298, and Asn-300. The Mn(2+) site is built by Gln-284, Glu-298, and Asn-300. Residues 402–546 (IGVDHIKIAD…YSTYAVENES (145 aa)) are oligomerization domain. The interval 547–929 (LISDKASILV…ALYKAFEAAY (383 aa)) is carbamoyl phosphate synthetic domain. In terms of domain architecture, ATP-grasp 2 spans 671-861 (EATLQALNIP…MAQVATKVIL (191 aa)). Positions 707, 746, 748, 752, 777, 778, 779, 780, 820, and 832 each coordinate ATP. Gln-820, Glu-832, and Asn-834 together coordinate Mg(2+). Positions 820, 832, and 834 each coordinate Mn(2+). Residues 930–1060 (LHMPDYGNIV…SRAFTLKVLD (131 aa)) form the MGS-like domain. Positions 930 to 1060 (LHMPDYGNIV…SRAFTLKVLD (131 aa)) are allosteric domain.

This sequence belongs to the CarB family. In terms of assembly, composed of two chains; the small (or glutamine) chain promotes the hydrolysis of glutamine to ammonia, which is used by the large (or ammonia) chain to synthesize carbamoyl phosphate. Tetramer of heterodimers (alpha,beta)4. Mg(2+) is required as a cofactor. It depends on Mn(2+) as a cofactor.

The enzyme catalyses hydrogencarbonate + L-glutamine + 2 ATP + H2O = carbamoyl phosphate + L-glutamate + 2 ADP + phosphate + 2 H(+). It carries out the reaction hydrogencarbonate + NH4(+) + 2 ATP = carbamoyl phosphate + 2 ADP + phosphate + 2 H(+). The protein operates within amino-acid biosynthesis; L-arginine biosynthesis; carbamoyl phosphate from bicarbonate: step 1/1. It functions in the pathway pyrimidine metabolism; UMP biosynthesis via de novo pathway; (S)-dihydroorotate from bicarbonate: step 1/3. Large subunit of the glutamine-dependent carbamoyl phosphate synthetase (CPSase). CPSase catalyzes the formation of carbamoyl phosphate from the ammonia moiety of glutamine, carbonate, and phosphate donated by ATP, constituting the first step of 2 biosynthetic pathways, one leading to arginine and/or urea and the other to pyrimidine nucleotides. The large subunit (synthetase) binds the substrates ammonia (free or transferred from glutamine from the small subunit), hydrogencarbonate and ATP and carries out an ATP-coupled ligase reaction, activating hydrogencarbonate by forming carboxy phosphate which reacts with ammonia to form carbamoyl phosphate. The sequence is that of Carbamoyl phosphate synthase large chain from Streptococcus agalactiae serotype Ia (strain ATCC 27591 / A909 / CDC SS700).